Here is a 439-residue protein sequence, read N- to C-terminus: Cytochrome b-c1 complex reductase subunit, mitochondrial (439 aa).

Residues 1-17 (MIRGSSALKSLTSRRLY) constitute a mitochondrion transit peptide.

Belongs to the peptidase M16 family. UQCRC1/QCR1 subfamily. As to quaternary structure, component of the ubiquinol-cytochrome c oxidoreductase (cytochrome b-c1 complex, complex III, CIII), a multisubunit enzyme composed of 10 subunits. The complex is composed of 3 respiratory subunits cytochrome b (COB), cytochrome c1 (CYT1) and Rieske protein (RIP1), 2 core protein subunits COR1 and QCR2, and 5 low-molecular weight protein subunits QCR6, QCR7, QCR8, QCR9 and QCR10. The complex exists as an obligatory dimer and forms supercomplexes (SCs) in the inner mitochondrial membrane with a monomer or a dimer of cytochrome c oxidase (complex IV, CIV), resulting in 2 different assemblies (supercomplexes III(2)IV and III(2)IV(2)).

The protein localises to the mitochondrion inner membrane. In terms of biological role, component of the ubiquinol-cytochrome c oxidoreductase, a multisubunit transmembrane complex that is part of the mitochondrial electron transport chain which drives oxidative phosphorylation. The complex plays an important role in the uptake of multiple carbon sources present in different host niches. This chain is Cytochrome b-c1 complex reductase subunit, mitochondrial, found in Candida albicans (strain SC5314 / ATCC MYA-2876) (Yeast).